The sequence spans 380 residues: Ceramide synthase 2 (380 aa).

Residues 1 to 40 lie on the Lumenal side of the membrane; sequence MLQTLHDYFWWERLWLPVNLTWADLEDRDGRVYAKASDLY. N-linked (GlcNAc...) asparagine glycosylation is present at Asn19. The chain crosses the membrane as a helical span at residues 41–61; that stretch reads ITLPLALLFLIIRYFFELYVA. Residues 67 to 128 are homeobox-like; that stretch reads LLNVKEKTRL…RRRRNQDRPS (62 aa). A TLC domain is found at 131 to 332; it reads KKFREASWRF…ILRMAHKFIT (202 aa). 4 helical membrane-spanning segments follow: residues 140–160, 181–201, 209–229, and 264–284; these read FTFY…KPWF, WYYM…ASDV, QIIH…ANYV, and IFIV…PFWI. Residues 291 to 300 carry the Last loop motif motif; sequence YPLELYPAFF. The chain crosses the membrane as a helical span at residues 304-324; it reads FFNFMMGVLQLLHIFWAYLIL. At 325-380 the chain is on the cytoplasmic side; the sequence is RMAHKFITGKVVEDERSDREETESSEGEEAAAGGGAKNRPLANGHPILNNNHRKND. The disordered stretch occupies residues 338 to 380; it reads DERSDREETESSEGEEAAAGGGAKNRPLANGHPILNNNHRKND. At Ser341 the chain carries Phosphoserine. Acidic residues predominate over residues 344–353; it reads EETESSEGEE. Thr346 bears the Phosphothreonine mark. Residues Ser348 and Ser349 each carry the phosphoserine modification.

As to quaternary structure, interacts with ATP6V0C, ASGR1, ASGR2 and SLC22A1/OCT1. Interacts with ELOV1, HSD17B12 and TECR. Interacts with NDUFS2. Acetylated. Deacetylation by SIRT3 increases enzyme activity and promotes mitochondrial ceramide accumulation. Post-translationally, phosphorylated at the C-terminus by CK2, leading to increase the ceramide synthase activity.

Its subcellular location is the endoplasmic reticulum membrane. It catalyses the reaction a very long-chain fatty acyl-CoA + a sphingoid base = an N-(very-long-chain fatty acyl)-sphingoid base + CoA + H(+). The catalysed reaction is docosanoyl-CoA + sphinganine = N-docosanoylsphinganine + CoA + H(+). The enzyme catalyses tetracosanoyl-CoA + sphinganine = N-tetracosanoylsphinganine + CoA + H(+). It carries out the reaction hexacosanoyl-CoA + sphinganine = N-hexacosanoylsphinganine + CoA + H(+). It catalyses the reaction (15Z)-tetracosenoyl-CoA + sphinganine = N-(15Z-tetracosenoyl)-sphinganine + CoA + H(+). The catalysed reaction is 2-hydroxytetracosanoyl-CoA + sphinganine = N-(2-hydroxytetracosanoyl)-sphinganine + CoA + H(+). The enzyme catalyses 2-hydroxydocosanoyl-CoA + sphinganine = N-(2-hydroxydocosanoyl)-sphinganine + CoA + H(+). It carries out the reaction 2-hydroxytetracosenoyl-CoA + sphinganine = N-(2-hydroxytetracosenoyl)-sphinganine + CoA + H(+). It catalyses the reaction tetracosenoyl-CoA + sphinganine = an N-tetracosenoylsphinganine + CoA + H(+). The catalysed reaction is hexacosenoyl-CoA + sphinganine = N-hexacosenoylsphinganine + CoA + H(+). The enzyme catalyses tetracosanoyl-CoA + sphing-4-enine = N-tetracosanoyl-sphing-4-enine + CoA + H(+). It carries out the reaction tetracosenoyl-CoA + sphing-4-enine = N-(tetracosenoyl)-sphing-4-enine + CoA + H(+). It catalyses the reaction heptadecasphing-4-enine + tetracosanoyl-CoA = N-tetracosanoyl-heptadecasphing-4-enine + CoA + H(+). The catalysed reaction is a fatty acyl-CoA + sphing-4-enine = an N-acylsphing-4-enine + CoA + H(+). The enzyme catalyses sphing-4-enine + hexadecanoyl-CoA = N-hexadecanoylsphing-4-enine + CoA + H(+). It carries out the reaction sphing-4-enine + octadecanoyl-CoA = N-octadecanoylsphing-4-enine + CoA + H(+). It catalyses the reaction eicosanoyl-CoA + sphing-4-enine = N-eicosanoyl-sphing-4-enine + CoA + H(+). The catalysed reaction is sphinganine + hexadecanoyl-CoA = N-hexadecanoylsphinganine + CoA + H(+). The enzyme catalyses sphinganine + octadecanoyl-CoA = N-(octadecanoyl)-sphinganine + CoA + H(+). It carries out the reaction sphinganine + (9Z)-octadecenoyl-CoA = N-(9Z-octadecenoyl)-sphinganine + CoA + H(+). It catalyses the reaction eicosanoyl-CoA + sphinganine = N-eicosanoylsphinganine + CoA + H(+). Its pathway is lipid metabolism; sphingolipid metabolism. Ceramide synthase activity is inhibited by sphingosine-1-phosphate. Functionally, ceramide synthase that catalyzes the transfer of the acyl chain from acyl-CoA to a sphingoid base, with high selectivity toward very-long-chain fatty acyl-CoA (chain length C22-C27). N-acylates sphinganine and sphingosine bases to form dihydroceramides and ceramides in de novo synthesis and salvage pathways, respectively. Plays a non-redundant role in the synthesis of ceramides with very-long-chain fatty acids in kidney, liver and brain. Regulates the abundance of myelin-specific sphingolipids galactosylceramide and sulfatide that affects myelin sheath architecture and motor neuron functions. The polypeptide is Ceramide synthase 2 (Bos taurus (Bovine)).